The sequence spans 962 residues: DNA primase (962 aa).

A CHC2-type zinc finger spans residues 894–932; that stretch reads CLRARHARSPPARTFVALSVDAHDRLCISLSQQCFATKC.

It belongs to the herpesviridae DNA primase family. As to quaternary structure, associates with the helicase and the primase-associated factor to form the helicase-primase factor.

The protein resides in the host nucleus. Functionally, essential component of the helicase/primase complex. Unwinds the DNA at the replication forks and generates single-stranded DNA for both leading and lagging strand synthesis. The primase initiates primer synthesis and thereby produces large amount of short RNA primers on the lagging strand that the polymerase elongates using dNTPs. The chain is DNA primase (UL52) from Sus scrofa (Pig).